The sequence spans 854 residues: Putative Tricorn-like protease C-terminal subunit (854 aa).

H539 acts as the Charge relay system in catalysis. Positions 554–646 (PIGGLGADYE…RVTVKLLKDE (93 aa)) are PDZ-like. Residue G709 coordinates substrate. The Nucleophile role is filled by S756. Catalysis depends on E814, which acts as the Charge relay system.

Belongs to the peptidase S41B family.

The protein resides in the cytoplasm. In terms of biological role, degrades oligopeptides in a sequential manner. This Sulfurisphaera tokodaii (strain DSM 16993 / JCM 10545 / NBRC 100140 / 7) (Sulfolobus tokodaii) protein is Putative Tricorn-like protease C-terminal subunit (triC).